A 162-amino-acid chain; its full sequence is Ubiquitin-fold modifier-conjugating enzyme 1 (162 aa).

Cys-115 (glycyl thioester intermediate) is an active-site residue.

It belongs to the ubiquitin-conjugating enzyme family. UFC1 subfamily. Interacts with uba-5. Expressed in the intestine.

E2-like enzyme which forms an intermediate with ufm-1. The intermediate is formed via a thioester linkage. This chain is Ubiquitin-fold modifier-conjugating enzyme 1, found in Caenorhabditis elegans.